Consider the following 1368-residue polypeptide: DNA-directed RNA polymerase subunit beta (1368 aa).

This sequence belongs to the RNA polymerase beta chain family. The RNAP catalytic core consists of 2 alpha, 1 beta, 1 beta' and 1 omega subunit. When a sigma factor is associated with the core the holoenzyme is formed, which can initiate transcription.

It catalyses the reaction RNA(n) + a ribonucleoside 5'-triphosphate = RNA(n+1) + diphosphate. Its function is as follows. DNA-dependent RNA polymerase catalyzes the transcription of DNA into RNA using the four ribonucleoside triphosphates as substrates. The protein is DNA-directed RNA polymerase subunit beta of Burkholderia mallei (strain SAVP1).